The chain runs to 155 residues: UPF0225 protein PC1_1977 (155 aa).

This sequence belongs to the UPF0225 family.

The sequence is that of UPF0225 protein PC1_1977 from Pectobacterium carotovorum subsp. carotovorum (strain PC1).